A 433-amino-acid chain; its full sequence is C2H2 type master regulator of conidiophore development brlA (433 aa).

Disordered stretches follow at residues 23–54 (PSEC…SMAS) and 238–268 (TFKS…RMSG). Residues 30-48 (TSSFSPLDSPTPTPTSLYS) show a composition bias toward low complexity. Polar residues predominate over residues 238-264 (TFKSHTPSTPHRSVSMGTPSGSDTPVS). 2 consecutive C2H2-type zinc fingers follow at residues 321–345 (FKCK…MKSH) and 351–376 (HVCW…TKTH). The segment at 391–423 (ETSQDFDPDFRGQLTPDGRPIYGSKLEDSMPDC) is disordered.

It localises to the nucleus. In terms of biological role, brlA, abaA and wetA are pivotal regulators of conidiophore development and conidium maturation. They act individually and together to regulate their own expression and that of numerous other sporulation-specific genes. Binds promoters of target genes at brlA response elements (BREs) containing the conserved sequence 5'-(C/A)(A/G)AGGG(G/A)-3'. This is C2H2 type master regulator of conidiophore development brlA from Penicillium camemberti (strain FM 013).